The primary structure comprises 146 residues: Large ribosomal subunit protein uL15 (146 aa).

Over residues 1 to 10 the composition is skewed to basic and acidic residues; it reads MKLHELKPAE. The segment at 1–51 is disordered; the sequence is MKLHELKPAEGSRQVRNRVGRGTSSGNGKTAGRGQKGQKARSGGGVRLGFE. Composition is skewed to gly residues over residues 23–35 and 42–51; these read TSSG…GRGQ and SGGGVRLGFE.

It belongs to the universal ribosomal protein uL15 family. In terms of assembly, part of the 50S ribosomal subunit.

Its function is as follows. Binds to the 23S rRNA. This chain is Large ribosomal subunit protein uL15, found in Enterococcus faecalis (strain ATCC 700802 / V583).